Here is a 203-residue protein sequence, read N- to C-terminus: Putative B3 domain-containing protein At1g50220 (203 aa).

The TF-B3 DNA-binding region spans 99–195 (DIVGNVALPK…KFIVLNFQHK (97 aa)).

Its subcellular location is the nucleus. The protein is Putative B3 domain-containing protein At1g50220 of Arabidopsis thaliana (Mouse-ear cress).